A 371-amino-acid chain; its full sequence is MSERSYYDILGVSKSANDEEIKSAYRKLAIKYHPDKNKGNKESEEKFKEATEAYEILRDPKKRQAYDQFGKAGVGAGAGGFGQGAYTDFSDIFGDFGDIFGDFFGGGRGGFGGGRRSGSQRGSDLRYNLEVSLEDAALGREYKIEIPRLESCGDCNGSGAAKGSSPTTCPDCGGSGQIRRTQGFFSVATTCPTCRGKGTTISNPCKTCGGQGLQEKRRTINIKIPPGVETGSRLKVSGEGEAGPNGGSHGDLYVVTHIKRHELFERQGNDLILVRKITLAQAILGAEIEVPTIDGKKAKMKIPEGTESGQVFRLKGHGMPYLGAYGKGDQHVVVKIEIPKKITRRQRELIEAFARESGENIPGSKGKIFTK.

Residues 5–70 (SYYDILGVSK…KKRQAYDQFG (66 aa)) form the J domain. The CR-type zinc finger occupies 139 to 217 (GREYKIEIPR…CGGQGLQEKR (79 aa)). The Zn(2+) site is built by Cys-152, Cys-155, Cys-169, Cys-172, Cys-191, Cys-194, Cys-205, and Cys-208. CXXCXGXG motif repeat units lie at residues 152 to 159 (CGDCNGSG), 169 to 176 (CPDCGGSG), 191 to 198 (CPTCRGKG), and 205 to 212 (CKTCGGQG).

Belongs to the DnaJ family. As to quaternary structure, homodimer. Zn(2+) is required as a cofactor.

It is found in the cytoplasm. Participates actively in the response to hyperosmotic and heat shock by preventing the aggregation of stress-denatured proteins and by disaggregating proteins, also in an autonomous, DnaK-independent fashion. Unfolded proteins bind initially to DnaJ; upon interaction with the DnaJ-bound protein, DnaK hydrolyzes its bound ATP, resulting in the formation of a stable complex. GrpE releases ADP from DnaK; ATP binding to DnaK triggers the release of the substrate protein, thus completing the reaction cycle. Several rounds of ATP-dependent interactions between DnaJ, DnaK and GrpE are required for fully efficient folding. Also involved, together with DnaK and GrpE, in the DNA replication of plasmids through activation of initiation proteins. The protein is Chaperone protein DnaJ of Leptospira borgpetersenii serovar Hardjo-bovis (strain JB197).